The chain runs to 307 residues: Porphobilinogen deaminase (307 aa).

Cys-241 carries the post-translational modification S-(dipyrrolylmethanemethyl)cysteine.

The protein belongs to the HMBS family. Monomer. It depends on dipyrromethane as a cofactor.

The catalysed reaction is 4 porphobilinogen + H2O = hydroxymethylbilane + 4 NH4(+). Its pathway is porphyrin-containing compound metabolism; protoporphyrin-IX biosynthesis; coproporphyrinogen-III from 5-aminolevulinate: step 2/4. Tetrapolymerization of the monopyrrole PBG into the hydroxymethylbilane pre-uroporphyrinogen in several discrete steps. In Coxiella burnetii (strain CbuG_Q212) (Coxiella burnetii (strain Q212)), this protein is Porphobilinogen deaminase.